The following is a 119-amino-acid chain: Fluoride-specific ion channel FluC (119 aa).

3 consecutive transmembrane segments (helical) span residues 37 to 54 (LFAN…AETV), 61 to 83 (LLLI…ETVT), and 93 to 112 (ALSN…WLGL). The Na(+) site is built by G69 and T72.

This sequence belongs to the fluoride channel Fluc/FEX (TC 1.A.43) family.

It localises to the cell inner membrane. The catalysed reaction is fluoride(in) = fluoride(out). Its activity is regulated as follows. Na(+) is not transported, but it plays an essential structural role and its presence is essential for fluoride channel function. Fluoride-specific ion channel. Important for reducing fluoride concentration in the cell, thus reducing its toxicity. This is Fluoride-specific ion channel FluC from Neisseria meningitidis serogroup C (strain 053442).